Consider the following 448-residue polypeptide: Fibulin-5 (448 aa).

The signal sequence occupies residues 1–23 (MPGLKRILTVTILALWLPHPGNA). An EGF-like 1; calcium-binding domain is found at 42–82 (DIDECRTIPEACRGDMMCVNQNGGYLCIPRTNPVYRGPYSN). Cystine bridges form between cysteine 46–cysteine 59, cysteine 53–cysteine 68, cysteine 131–cysteine 144, cysteine 138–cysteine 153, cysteine 155–cysteine 166, cysteine 172–cysteine 181, cysteine 177–cysteine 190, cysteine 192–cysteine 205, cysteine 211–cysteine 221, cysteine 217–cysteine 230, cysteine 232–cysteine 245, cysteine 251–cysteine 262, cysteine 258–cysteine 271, cysteine 273–cysteine 286, cysteine 292–cysteine 305, cysteine 299–cysteine 314, and cysteine 320–cysteine 332. Positions 54 to 56 (RGD) match the Cell attachment site motif. The region spanning 127 to 167 (DVDECATDSHQCNPTQICINTEGGYTCSCTDGYWLLEGQCL) is the EGF-like 2; calcium-binding domain. The EGF-like 3; calcium-binding domain occupies 168 to 206 (DIDECRYGYCQQLCANVPGSYSCTCNPGFTLNDDGRSCQ). Positions 207 to 246 (DVNECETENPCVQTCVNTYGSFICRCDPGYELEEDGIHCS) constitute an EGF-like 4; calcium-binding domain. Residues 245–448 (CSDMDECSFS…LRIYVSQYPF (204 aa)) form an interaction with LOXL1 region. The 41-residue stretch at 247–287 (DMDECSFSEFLCQHECVNQPGSYFCSCPPGYVLLDDNRSCQ) folds into the EGF-like 5; calcium-binding domain. Residues asparagine 283 and asparagine 296 are each glycosylated (N-linked (GlcNAc...) asparagine). Positions 288–333 (DINECEHRNHTCTSLQTCYNLQGGFKCIDPISCEEPYLLIGENRCM) constitute an EGF-like 6; calcium-binding domain.

Belongs to the fibulin family. As to quaternary structure, homodimer. Monomer, homodimerizes in presence of Ca(2+). Interacts with ELN. Interacts (via N-terminus) with the integrins ITGAV/ITGB3, ITGAV/ITGB5 and ITGA9/ITGB1. Interacts with FBN1 (via N-terminal domain). Forms a ternary complex with ELN and FBN1. Interacts with EFEMP2 with moderate affinity. Interacts with LOXL1. N-glycosylated.

It localises to the secreted. Its subcellular location is the extracellular space. The protein resides in the extracellular matrix. Essential for elastic fiber formation, is involved in the assembly of continuous elastin (ELN) polymer and promotes the interaction of microfibrils and ELN. Stabilizes and organizes elastic fibers in the skin, lung and vasculature. Promotes adhesion of endothelial cells through interaction of integrins and the RGD motif. Vascular ligand for integrin receptors which may play a role in vascular development and remodeling. May act as an adapter that mediates the interaction between FBN1 and ELN. This is Fibulin-5 (Fbln5) from Mus musculus (Mouse).